We begin with the raw amino-acid sequence, 1203 residues long: DNA-directed RNA polymerase subunit beta (1203 aa).

The segment covering 1174-1195 has biased composition (basic and acidic residues); the sequence is AAQEAKAAFEAEEAEKATKAEA. The segment at 1174-1203 is disordered; sequence AAQEAKAAFEAEEAEKATKAEATEEAAEQE.

This sequence belongs to the RNA polymerase beta chain family. In terms of assembly, the RNAP catalytic core consists of 2 alpha, 1 beta, 1 beta' and 1 omega subunit. When a sigma factor is associated with the core the holoenzyme is formed, which can initiate transcription.

It carries out the reaction RNA(n) + a ribonucleoside 5'-triphosphate = RNA(n+1) + diphosphate. Its function is as follows. DNA-dependent RNA polymerase catalyzes the transcription of DNA into RNA using the four ribonucleoside triphosphates as substrates. This Streptococcus pneumoniae serotype 19F (strain G54) protein is DNA-directed RNA polymerase subunit beta.